We begin with the raw amino-acid sequence, 343 residues long: Lumican (343 aa).

Positions 1 to 18 (MTLNSLPIFLVLISGIFC) are cleaved as a signal peptide. A Pyrrolidone carboxylic acid modification is found at Gln-19. 2 positions are modified to sulfotyrosine: Tyr-20 and Tyr-22. An LRRNT domain is found at 31–69 (DPFGPSTAVCAPECNCPLSYPTAMYCDNLKLKTIPIVPS). 8 LRR repeats span residues 70 to 91 (GIKYLYLRNNMIESIEENTFDN), 94 to 117 (DLQWLILDHNHLENSKIKGRVFSK), 120 to 140 (NLKKLHINYNNLTEAVGPLPK), 141 to 162 (TLDDLQLSHNKITKVNPGALEG), 165 to 186 (NLTVIHLQNNQLKADSISGAFK), 190 to 211 (SLLYLDLSFNQLTKLPTGLPHS), 212 to 232 (LLMLYFDNNQISNIPDEYFQG), and 235 to 255 (TLQYLRLSHNKLTDSGIPGNV). N-linked (GlcNAc...) (keratan sulfate) asparagine glycosylation occurs at Asn-91. N-linked (GlcNAc...) (keratan sulfate) asparagine glycosylation occurs at Asn-130. The N-linked (GlcNAc...) (keratan sulfate) asparagine glycan is linked to Asn-165. The N-linked (GlcNAc...) (keratan sulfate) asparagine glycan is linked to Asn-257. 3 LRR repeats span residues 260–281 (SLVELDLSFNQLKSIPTVSENL), 282–301 (ENFYLQVNKINKFPLSSFCK), and 310–330 (KITHLRLDGNNLTRADLPQEM). An intrachain disulfide couples Cys-300 to Cys-333. Residue Asn-320 is glycosylated (N-linked (GlcNAc...) asparagine).

Belongs to the small leucine-rich proteoglycan (SLRP) family. SLRP class II subfamily. In terms of assembly, binds to laminin. Contains keratan sulfate.

The protein localises to the secreted. It localises to the extracellular space. Its subcellular location is the extracellular matrix. This is Lumican (LUM) from Coturnix japonica (Japanese quail).